Reading from the N-terminus, the 682-residue chain is Potassium-transporting ATPase ATP-binding subunit (682 aa).

4 consecutive transmembrane segments (helical) span residues 34–54 (PVMF…IAMA), 62–82 (ALFS…ANFA), 219–239 (IALT…TATL), and 254–274 (VLVA…LSAI). Asp307 functions as the 4-aspartylphosphate intermediate in the catalytic mechanism. ATP contacts are provided by residues Asp344, Glu348, 377 to 384 (FTAQSRMS), and Lys395. Mg(2+)-binding residues include Asp518 and Asp522. Helical transmembrane passes span 588-608 (FAII…LNIM), 616-636 (AILS…PLAL), and 656-676 (IYGL…DLLL).

Belongs to the cation transport ATPase (P-type) (TC 3.A.3) family. Type IA subfamily. In terms of assembly, the system is composed of three essential subunits: KdpA, KdpB and KdpC.

It localises to the cell inner membrane. It carries out the reaction K(+)(out) + ATP + H2O = K(+)(in) + ADP + phosphate + H(+). Part of the high-affinity ATP-driven potassium transport (or Kdp) system, which catalyzes the hydrolysis of ATP coupled with the electrogenic transport of potassium into the cytoplasm. This subunit is responsible for energy coupling to the transport system and for the release of the potassium ions to the cytoplasm. In Escherichia coli O9:H4 (strain HS), this protein is Potassium-transporting ATPase ATP-binding subunit.